Consider the following 921-residue polypeptide: Probable dipeptidyl-aminopeptidase B (921 aa).

Disordered regions lie at residues M1 to T33 and V45 to R66. Topologically, residues M1–R109 are cytoplasmic. The span at Q10 to N22 shows a compositional bias: polar residues. Over residues S23–T33 the composition is skewed to low complexity. Residues L110–L130 traverse the membrane as a helical; Signal-anchor for type II membrane protein segment. Residues G131–V921 are Vacuolar-facing. Residues S138 to V157 form a disordered region. N362 carries an N-linked (GlcNAc...) asparagine glycan. The active-site Charge relay system is S768. The N-linked (GlcNAc...) asparagine glycan is linked to N822. Residues D845 and H878 each act as charge relay system in the active site.

Belongs to the peptidase S9B family.

It is found in the vacuole membrane. It catalyses the reaction Release of an N-terminal dipeptide, Xaa-Yaa-|-Zaa-, from a polypeptide, preferentially when Yaa is Pro, provided Zaa is neither Pro nor hydroxyproline.. Functionally, type IV dipeptidyl-peptidase which removes N-terminal dipeptides sequentially from polypeptides having unsubstituted N-termini provided that the penultimate residue is proline. In Botryotinia fuckeliana (strain B05.10) (Noble rot fungus), this protein is Probable dipeptidyl-aminopeptidase B (dapB).